Here is a 397-residue protein sequence, read N- to C-terminus: Acetate kinase (397 aa).

Asparagine 7 contacts Mg(2+). Position 14 (lysine 14) interacts with ATP. Substrate is bound at residue arginine 90. Aspartate 147 functions as the Proton donor/acceptor in the catalytic mechanism. Residues 207–211 (HLGNG), 282–284 (DFR), and 330–334 (GLGEN) contribute to the ATP site. Glutamate 383 is a Mg(2+) binding site.

It belongs to the acetokinase family. In terms of assembly, homodimer. The cofactor is Mg(2+). Mn(2+) serves as cofactor.

Its subcellular location is the cytoplasm. The enzyme catalyses acetate + ATP = acetyl phosphate + ADP. The protein operates within metabolic intermediate biosynthesis; acetyl-CoA biosynthesis; acetyl-CoA from acetate: step 1/2. Catalyzes the formation of acetyl phosphate from acetate and ATP. Can also catalyze the reverse reaction. The chain is Acetate kinase from Clostridium botulinum (strain Langeland / NCTC 10281 / Type F).